The following is a 331-amino-acid chain: UPF0194 membrane protein YbhG (331 aa).

The first 19 residues, 1-19, serve as a signal peptide directing secretion; it reads MKKPVVIGLAIAAIVAVIA. The stretch at 107–208 forms a coiled coil; that stretch reads EEIAQAAAAV…LDLQDTTLIA (102 aa).

This sequence belongs to the UPF0194 family.

The protein resides in the periplasm. This Salmonella paratyphi A (strain ATCC 9150 / SARB42) protein is UPF0194 membrane protein YbhG.